The following is a 262-amino-acid chain: MNKPHLLIDAGNSRIKWALADARRTLVDTGAFGHTRDGGADPDWSALPRPHGAWISNVAGADVAARLDALLDARWPGLPRTTIRSRPAQCGVTNGYTTPDQLGSDRWAGLIGARAAFPGEHLLIATFGTATTLEALRADGRFTGGLIAPGWALMMRALGTHTAQLPTLTTDIASGLLAGAQAEPFQVDTPRSLSAGCLYAQAGLIERAWRDLADAWQAPVRLVLAGGAADDVARALTLPHTRHDALILSGLALIAAEGAAQD.

ATP is bound at residue Asp9–Lys16. Residues Tyr96 and Gly103–Arg106 contribute to the substrate site. Residue Asp105 is the Proton acceptor of the active site. Residue Thr129 participates in ATP binding. Thr189 serves as a coordination point for substrate.

The protein belongs to the type III pantothenate kinase family. In terms of assembly, homodimer. Requires NH4(+) as cofactor. The cofactor is K(+).

It localises to the cytoplasm. It catalyses the reaction (R)-pantothenate + ATP = (R)-4'-phosphopantothenate + ADP + H(+). The protein operates within cofactor biosynthesis; coenzyme A biosynthesis; CoA from (R)-pantothenate: step 1/5. Its function is as follows. Catalyzes the phosphorylation of pantothenate (Pan), the first step in CoA biosynthesis. This Burkholderia ambifaria (strain MC40-6) protein is Type III pantothenate kinase.